Reading from the N-terminus, the 212-residue chain is Transmembrane emp24 domain-containing protein p24delta4 (212 aa).

The N-terminal stretch at 1–25 (MKKKMIPTTILLSALIFSLSPICEA) is a signal peptide. Topologically, residues 26–179 (VWLTVPHTGS…RIVSEKTNSR (154 aa)) are lumenal. A GOLD domain is found at 35–147 (SKCVSEEIQS…IEGVELEFKK (113 aa)). Asparagine 82 carries N-linked (GlcNAc...) asparagine glycosylation. Residues 133–155 (ARKEKIEGVELEFKKLEGAVEAI) adopt a coiled-coil conformation. An omega-N-methylated arginine mark is found at arginine 165 and arginine 170. Residues 180–200 (VAWYSIMSLGICIVVSGLQIL) traverse the membrane as a helical segment. Topologically, residues 201–212 (YLKQYFEKKKLI) are cytoplasmic. The COPII vesicle coat-binding signature appears at 205 to 206 (YF). The COPI vesicle coat-binding signature appears at 205–212 (YFEKKKLI).

The protein belongs to the EMP24/GP25L family. Probably oligomerizes with other members of the EMP24/GP25L family. Associates with the COPI vesicle coat (coatomer). Associates with the COPII vesicle coat (coatomer).

It localises to the endoplasmic reticulum membrane. It is found in the golgi apparatus membrane. Involved in vesicular protein trafficking. Mainly functions in the early secretory pathway. Required for trafficking GLL23, a component of the PYK10 complex. May act as a receptor facilitating its packing into COPII carriers and export from the endoplasmic reticulum. The chain is Transmembrane emp24 domain-containing protein p24delta4 (CYB) from Arabidopsis thaliana (Mouse-ear cress).